The following is a 356-amino-acid chain: Dihydroorotate dehydrogenase (quinone) (356 aa).

Residues 66–70 (AGFDK) and Thr-90 each bind FMN. Position 70 (Lys-70) interacts with substrate. 115–119 (NRMGF) is a substrate binding site. Residues Asn-143 and Asn-176 each coordinate FMN. Substrate is bound at residue Asn-176. The Nucleophile role is filled by Ser-179. Residue Asn-181 participates in substrate binding. The FMN site is built by Lys-212 and Thr-240. Position 241–242 (241–242 (NT)) interacts with substrate. Residues Gly-266, Gly-295, and 316-317 (YT) contribute to the FMN site.

It belongs to the dihydroorotate dehydrogenase family. Type 2 subfamily. Monomer. FMN serves as cofactor.

It localises to the cell membrane. It carries out the reaction (S)-dihydroorotate + a quinone = orotate + a quinol. Its pathway is pyrimidine metabolism; UMP biosynthesis via de novo pathway; orotate from (S)-dihydroorotate (quinone route): step 1/1. In terms of biological role, catalyzes the conversion of dihydroorotate to orotate with quinone as electron acceptor. The chain is Dihydroorotate dehydrogenase (quinone) from Rhodococcus erythropolis (strain PR4 / NBRC 100887).